The primary structure comprises 132 residues: Ribosome-binding factor A (132 aa).

The protein belongs to the RbfA family. As to quaternary structure, monomer. Binds 30S ribosomal subunits, but not 50S ribosomal subunits or 70S ribosomes.

It is found in the cytoplasm. In terms of biological role, one of several proteins that assist in the late maturation steps of the functional core of the 30S ribosomal subunit. Associates with free 30S ribosomal subunits (but not with 30S subunits that are part of 70S ribosomes or polysomes). Required for efficient processing of 16S rRNA. May interact with the 5'-terminal helix region of 16S rRNA. The chain is Ribosome-binding factor A from Burkholderia vietnamiensis (strain G4 / LMG 22486) (Burkholderia cepacia (strain R1808)).